Here is a 121-residue protein sequence, read N- to C-terminus: UPF0145 protein SGR_4080 (121 aa).

Belongs to the UPF0145 family.

The chain is UPF0145 protein SGR_4080 from Streptomyces griseus subsp. griseus (strain JCM 4626 / CBS 651.72 / NBRC 13350 / KCC S-0626 / ISP 5235).